We begin with the raw amino-acid sequence, 574 residues long: Glycine--tRNA ligase (574 aa).

Residues R96 and E162 each contribute to the substrate site. ATP-binding positions include 194–196 (RNE), 204–209 (IRLREF), 327–328 (EC), and 450–453 (GIDR). A substrate-binding site is contributed by 209–213 (FTQAE). Residue 446 to 450 (EPSYG) coordinates substrate.

The protein belongs to the class-II aminoacyl-tRNA synthetase family.

It localises to the cytoplasm. It carries out the reaction tRNA(Gly) + glycine + ATP = glycyl-tRNA(Gly) + AMP + diphosphate. Functionally, catalyzes the attachment of glycine to tRNA(Gly). The protein is Glycine--tRNA ligase of Methanococcus vannielii (strain ATCC 35089 / DSM 1224 / JCM 13029 / OCM 148 / SB).